The chain runs to 351 residues: Phosphoribosylformylglycinamidine cyclo-ligase (351 aa).

The protein belongs to the AIR synthase family.

Its subcellular location is the cytoplasm. It catalyses the reaction 2-formamido-N(1)-(5-O-phospho-beta-D-ribosyl)acetamidine + ATP = 5-amino-1-(5-phospho-beta-D-ribosyl)imidazole + ADP + phosphate + H(+). It participates in purine metabolism; IMP biosynthesis via de novo pathway; 5-amino-1-(5-phospho-D-ribosyl)imidazole from N(2)-formyl-N(1)-(5-phospho-D-ribosyl)glycinamide: step 2/2. The protein is Phosphoribosylformylglycinamidine cyclo-ligase of Burkholderia lata (strain ATCC 17760 / DSM 23089 / LMG 22485 / NCIMB 9086 / R18194 / 383).